The following is a 408-amino-acid chain: Imidazolonepropionase (408 aa).

Residues H73 and H75 each contribute to the Fe(3+) site. Zn(2+) contacts are provided by H73 and H75. Positions 82, 145, and 178 each coordinate 4-imidazolone-5-propanoate. Residue Y145 coordinates N-formimidoyl-L-glutamate. H243 lines the Fe(3+) pocket. H243 lines the Zn(2+) pocket. Residue Q246 participates in 4-imidazolone-5-propanoate binding. Residue D318 coordinates Fe(3+). Residue D318 participates in Zn(2+) binding. Positions 320 and 322 each coordinate N-formimidoyl-L-glutamate. S323 provides a ligand contact to 4-imidazolone-5-propanoate.

It belongs to the metallo-dependent hydrolases superfamily. HutI family. The cofactor is Zn(2+). Fe(3+) is required as a cofactor.

The protein resides in the cytoplasm. It carries out the reaction 4-imidazolone-5-propanoate + H2O = N-formimidoyl-L-glutamate. Its pathway is amino-acid degradation; L-histidine degradation into L-glutamate; N-formimidoyl-L-glutamate from L-histidine: step 3/3. Its function is as follows. Catalyzes the hydrolytic cleavage of the carbon-nitrogen bond in imidazolone-5-propanoate to yield N-formimidoyl-L-glutamate. It is the third step in the universal histidine degradation pathway. The chain is Imidazolonepropionase from Shewanella halifaxensis (strain HAW-EB4).